We begin with the raw amino-acid sequence, 143 residues long: UPF0179 protein PTO0851 (143 aa).

Belongs to the UPF0179 family.

In Picrophilus torridus (strain ATCC 700027 / DSM 9790 / JCM 10055 / NBRC 100828 / KAW 2/3), this protein is UPF0179 protein PTO0851.